An 84-amino-acid polypeptide reads, in one-letter code: MAHKKGGGSSKNGRDSQSKRLGVKVYGGQKVISGNIIVRQRGTQFHAGRNVDIGRDHTIFATASGYVKFHTNKFGKKTISVVTE.

A disordered region spans residues 1-21 (MAHKKGGGSSKNGRDSQSKRL).

This sequence belongs to the bacterial ribosomal protein bL27 family.

In Brachyspira hyodysenteriae (strain ATCC 49526 / WA1), this protein is Large ribosomal subunit protein bL27.